A 470-amino-acid chain; its full sequence is Arginine ADP-riboxanase OspC1 (470 aa).

NAD(+)-binding residues include His138, Gln139, Ser140, Leu144, Ile157, Asn167, Phe183, His201, Phe206, Asp226, and Glu320. The active site involves Glu320. ANK repeat units follow at residues 363–392 (IALQ…ITRQ), 399–431 (HELY…DVNT), and 438–467 (SGDC…TSDN).

The protein belongs to the OspC family. As to quaternary structure, interacts with host calmodulin (CALM1, CALM2 and/or CALM3); specifically interacts with the apo form of calmodulin, preventing calcium-binding.

It is found in the secreted. The protein resides in the host nucleus. It catalyses the reaction L-arginyl-[protein] + NAD(+) = ADP-riboxanated L-argininyl-[protein] + nicotinamide + NH4(+) + H(+). ADP-riboxanase effector that mediates arginine ADP-riboxanation of host caspases. ADP-riboxanation of host apoptotic caspases (CASP3, CASP8 and CASP9) prevents their activation, thereby inhibiting host cell extrinsic and intrinsic apoptosis. Does not catalyze ADP-riboxanation of host CASP4/CASP11. Independently of its ADP-riboxanase activity, acts as an inhibitor of calcium signaling by inhibiting host calmodulin, preventing activation of the JAK-STAT signaling pathway in response to interferon-beta. Mechanistically, acts by binding to the apo form of calmodulin, preventing calcium-binding and ability to activate host CaMK2 (CAMKII), which is required to stimulate the JAK-STAT signaling pathway in response to interferon-beta. The protein is Arginine ADP-riboxanase OspC1 of Shigella flexneri.